A 69-amino-acid polypeptide reads, in one-letter code: Putative membrane protein insertion efficiency factor (69 aa).

It belongs to the UPF0161 family.

It is found in the cell membrane. Its function is as follows. Could be involved in insertion of integral membrane proteins into the membrane. This Alkaliphilus metalliredigens (strain QYMF) protein is Putative membrane protein insertion efficiency factor.